The sequence spans 373 residues: Acyl-CoA dehydrogenase FadE27 (373 aa).

Positions 251, 327, and 331 each coordinate FAD.

The protein belongs to the acyl-CoA dehydrogenase family. In terms of assembly, heterotetramer (dimer of heterodimers) composed of FadE26 and FadE27. FAD is required as a cofactor.

The enzyme catalyses (25S)-3-oxocholest-4-en-26-oyl-CoA + A = 3-oxo-cholest-4,24-dien-26-oyl-CoA + AH2. It functions in the pathway steroid metabolism; cholesterol degradation. Its activity is regulated as follows. Uncompetitively inhibited by high concentration of 3-OCS-CoA. Functionally, involved in the first cycle of side chain dehydrogenation in the beta-oxidation of cholesterol catabolism. It contributes partly to the virulence by increasing the efficiency of beta-oxidation. Catalyzes the dehydrogenation of acyl-CoA ester side chains of (25S)-3-oxo-cholest-4-en-26-oyl-CoA (3-OCS-CoA) to yield (24E)-3-oxo-cholest-4,24-dien-26-oyl-CoA. Also able to dehydrogenate steroyl-CoA such as 3-oxo-chol-4-en-24-oyl-CoA (3-OCO-CoA) as well as 3-oxo-4-pregnene-20-carboxyl-CoA (3-OPC-CoA). It dehydrogenates only (25S)-OCS-CoA diastereomer. The chain is Acyl-CoA dehydrogenase FadE27 (fadE27) from Mycobacterium tuberculosis (strain ATCC 25618 / H37Rv).